The primary structure comprises 179 residues: Replication restart protein DnaT (179 aa).

The tract at residues 156 to 179 is disordered; that stretch reads GGLPKRDVNTVSEPDSQIPPGFRG.

Belongs to the DnaT family. As to quaternary structure, homooligomerizes. Interacts with PriB. Component of the replication restart primosome. Primosome assembly occurs via a 'hand-off' mechanism. PriA binds to replication forks, subsequently PriB then DnaT bind; DnaT then displaces ssDNA to generate the helicase loading substrate.

Involved in the restart of stalled replication forks, which reloads the replicative helicase on sites other than the origin of replication. Can function in multiple replication restart pathways. Displaces ssDNA from a PriB-ssDNA complex. Probably forms a spiral filament on ssDNA. The protein is Replication restart protein DnaT of Escherichia coli (strain ATCC 8739 / DSM 1576 / NBRC 3972 / NCIMB 8545 / WDCM 00012 / Crooks).